The chain runs to 571 residues: Urease subunit alpha (571 aa).

The Urease domain occupies 129 to 571 (GGIDSHIHFI…LPMAQRYFLF (443 aa)). The Ni(2+) site is built by H134, H136, and K217. The residue at position 217 (K217) is an N6-carboxylysine. H219 is a binding site for substrate. H246 and H272 together coordinate Ni(2+). Residue H320 is the Proton donor of the active site. Position 360 (D360) interacts with Ni(2+).

The protein belongs to the metallo-dependent hydrolases superfamily. Urease alpha subunit family. Heterotrimer of UreA (gamma), UreB (beta) and UreC (alpha) subunits. Three heterotrimers associate to form the active enzyme. It depends on Ni cation as a cofactor. In terms of processing, carboxylation allows a single lysine to coordinate two nickel ions.

Its subcellular location is the cytoplasm. It carries out the reaction urea + 2 H2O + H(+) = hydrogencarbonate + 2 NH4(+). Its pathway is nitrogen metabolism; urea degradation; CO(2) and NH(3) from urea (urease route): step 1/1. The protein is Urease subunit alpha of Cupriavidus necator (strain ATCC 17699 / DSM 428 / KCTC 22496 / NCIMB 10442 / H16 / Stanier 337) (Ralstonia eutropha).